We begin with the raw amino-acid sequence, 93 residues long: Small ribosomal subunit protein uS15 (93 aa).

This sequence belongs to the universal ribosomal protein uS15 family. Part of the 30S ribosomal subunit. Forms a bridge to the 50S subunit in the 70S ribosome, contacting the 23S rRNA.

Its function is as follows. One of the primary rRNA binding proteins, it binds directly to 16S rRNA where it helps nucleate assembly of the platform of the 30S subunit by binding and bridging several RNA helices of the 16S rRNA. Functionally, forms an intersubunit bridge (bridge B4) with the 23S rRNA of the 50S subunit in the ribosome. The chain is Small ribosomal subunit protein uS15 from Anaplasma phagocytophilum (strain HZ).